The chain runs to 649 residues: ABC transporter G family member 5 (649 aa).

In terms of domain architecture, ABC transporter spans 42 to 284 (VKTEEESLKL…LRSNGLHPPL (243 aa)). Position 80–87 (80–87 (GPSGAGKS)) interacts with ATP. Residues 308–336 (SRRAAHVLTPQTTLQEKRSEDSQGESKSG) are disordered. The region spanning 371–581 (EETMILTHRF…PFEGFLINEF (211 aa)) is the ABC transmembrane type-2 domain. The next 6 helical transmembrane spans lie at 390–410 (LFAC…LIFH), 425–445 (LFAF…PIFL), 474–494 (LPFL…LVGL), 506–526 (LLIW…SALV), 529–549 (FIVG…FSGY), and 617–637 (VVIM…ILRC).

This sequence belongs to the ABC transporter superfamily. ABCG family. Eye pigment precursor importer (TC 3.A.1.204) subfamily.

It localises to the membrane. The polypeptide is ABC transporter G family member 5 (ABCG5) (Arabidopsis thaliana (Mouse-ear cress)).